The chain runs to 251 residues: 7-cyano-7-deazaguanine synthase (251 aa).

The interval 1–21 (MSDLPRHSPRRQHAGESAVTA) is disordered. Residue 35–45 (YSGGMDSYTVL) coordinates ATP. Zn(2+) is bound by residues C212, C220, C223, and C226.

Belongs to the QueC family. Zn(2+) serves as cofactor.

It catalyses the reaction 7-carboxy-7-deazaguanine + NH4(+) + ATP = 7-cyano-7-deazaguanine + ADP + phosphate + H2O + H(+). It functions in the pathway purine metabolism; 7-cyano-7-deazaguanine biosynthesis. Catalyzes the ATP-dependent conversion of 7-carboxy-7-deazaguanine (CDG) to 7-cyano-7-deazaguanine (preQ(0)). The sequence is that of 7-cyano-7-deazaguanine synthase from Chromohalobacter salexigens (strain ATCC BAA-138 / DSM 3043 / CIP 106854 / NCIMB 13768 / 1H11).